Reading from the N-terminus, the 358-residue chain is DnaJ homolog subfamily B member 11 (358 aa).

The N-terminal stretch at 1-22 is a signal peptide; that stretch reads MAPQNLSTFCLLLLYLIGAVIA. The region spanning 25–90 is the J domain; the sequence is DFYKILGVPR…EKRKQYDTYG (66 aa). Thr-188 bears the Phosphothreonine mark. Asn-261 carries N-linked (GlcNAc...) asparagine glycosylation.

Part of a large chaperone multiprotein complex comprising DNAJB11, HSP90B1, HSPA5, HYOU, PDIA2, PDIA4, PDIA6, PPIB, SDF2L1, UGGT1 and very small amounts of ERP29, but not, or at very low levels, CALR nor CANX. Binds to denatured substrates in an ATP-independent manner. Interacts via the J domain with HSPA5 in an ATP-dependent manner. In terms of processing, contains high-mannose Endo H-sensitive carbohydrates. Cys-169, Cys-171, Cys-193 and Cys-196 form intramolecular disulfide bonds. The preferential partner for each Cys is not known. Post-translationally, thr-188 was reported to be phosphorylated upon DNA damage by ATM or ATR; however as this position has been shown to be in the ER lumen, the in vivo relevance is not proven. Widely expressed.

Its subcellular location is the endoplasmic reticulum lumen. Functionally, as a co-chaperone for HSPA5 it is required for proper folding, trafficking or degradation of proteins. Binds directly to both unfolded proteins that are substrates for ERAD and nascent unfolded peptide chains, but dissociates from the HSPA5-unfolded protein complex before folding is completed. May help recruiting HSPA5 and other chaperones to the substrate. Stimulates HSPA5 ATPase activity. It is necessary for maturation and correct trafficking of PKD1. This Homo sapiens (Human) protein is DnaJ homolog subfamily B member 11 (DNAJB11).